Consider the following 130-residue polypeptide: Small ribosomal subunit protein uS9 (130 aa).

The protein belongs to the universal ribosomal protein uS9 family.

This chain is Small ribosomal subunit protein uS9, found in Shewanella amazonensis (strain ATCC BAA-1098 / SB2B).